Here is a 458-residue protein sequence, read N- to C-terminus: Protein unc-93 homolog A (458 aa).

5 helical membrane passes run Val-8 to Leu-28, Thr-42 to Ile-62, Trp-69 to Asn-89, Trp-90 to Ala-110, and Ile-140 to Phe-160. Residue Asn-190 is glycosylated (N-linked (GlcNAc...) asparagine). 7 consecutive transmembrane segments (helical) span residues Thr-202–Leu-222, Leu-258–Leu-275, Cys-286–Leu-306, Ala-321–Trp-341, Thr-345–Trp-365, Leu-390–Thr-410, and Leu-412–Leu-432.

It belongs to the unc-93 family.

The protein resides in the cell membrane. The chain is Protein unc-93 homolog A (Unc93a) from Mus musculus (Mouse).